Consider the following 243-residue polypeptide: Uridylate kinase (243 aa).

12–15 (KLSG) contacts ATP. G54 is a UMP binding site. Positions 55 and 59 each coordinate ATP. UMP is bound at residue 135–142 (TGNPYFTT). The ATP site is built by N163, Y169, and D172.

This sequence belongs to the UMP kinase family. Homohexamer.

The protein resides in the cytoplasm. It carries out the reaction UMP + ATP = UDP + ADP. It functions in the pathway pyrimidine metabolism; CTP biosynthesis via de novo pathway; UDP from UMP (UMPK route): step 1/1. With respect to regulation, inhibited by UTP. Its function is as follows. Catalyzes the reversible phosphorylation of UMP to UDP. The chain is Uridylate kinase from Roseiflexus sp. (strain RS-1).